The sequence spans 663 residues: UvrABC system protein B (663 aa).

The 241-residue stretch at 31 to 271 (DNIEGGEKAQ…EQSISKIQAE (241 aa)) folds into the Helicase ATP-binding domain. Residue 44–51 (GATGTGKT) participates in ATP binding. Positions 97 to 120 (YYDYYQPEAYVPSSDTYIEKDSSV) match the Beta-hairpin motif. A Helicase C-terminal domain is found at 435–601 (QMDDLLGEIN…TIKKDIRDLI (167 aa)). The UVR domain occupies 627–662 (QEAIKQLQKNMQEAAELLDFELAAQLRDLILELKAM).

It belongs to the UvrB family. As to quaternary structure, forms a heterotetramer with UvrA during the search for lesions. Interacts with UvrC in an incision complex.

It localises to the cytoplasm. Functionally, the UvrABC repair system catalyzes the recognition and processing of DNA lesions. A damage recognition complex composed of 2 UvrA and 2 UvrB subunits scans DNA for abnormalities. Upon binding of the UvrA(2)B(2) complex to a putative damaged site, the DNA wraps around one UvrB monomer. DNA wrap is dependent on ATP binding by UvrB and probably causes local melting of the DNA helix, facilitating insertion of UvrB beta-hairpin between the DNA strands. Then UvrB probes one DNA strand for the presence of a lesion. If a lesion is found the UvrA subunits dissociate and the UvrB-DNA preincision complex is formed. This complex is subsequently bound by UvrC and the second UvrB is released. If no lesion is found, the DNA wraps around the other UvrB subunit that will check the other stand for damage. The protein is UvrABC system protein B of Streptococcus equi subsp. equi (strain 4047).